The following is a 257-amino-acid chain: Snake venom serine proteinase 11 (257 aa).

An N-terminal signal peptide occupies residues 1–18 (MVLIRVLANLLILQLSYA). Positions 19–24 (QKSSEL) are excised as a propeptide. The Peptidase S1 domain maps to 25-248 (VVGGDECNIN…YTEWIQSIIT (224 aa)). Cystine bridges form between C31-C162, C49-C65, C97-C255, C141-C209, C173-C188, and C199-C224. Catalysis depends on charge relay system residues H64 and D109. N120 carries N-linked (GlcNAc...) asparagine glycosylation. The Charge relay system role is filled by S203.

Belongs to the peptidase S1 family. Snake venom subfamily. As to quaternary structure, monomer. Expressed by the venom gland.

The protein localises to the secreted. Snake venom serine protease that may act in the hemostasis system of the prey. The chain is Snake venom serine proteinase 11 from Crotalus adamanteus (Eastern diamondback rattlesnake).